The primary structure comprises 1978 residues: Sodium channel protein type 8 subunit alpha (1978 aa).

Disordered regions lie at residues 1–20 (MAAR…FTPE) and 28–62 (RIAE…LEAG). The Cytoplasmic portion of the chain corresponds to 1–132 (MAARLLAPPG…RIAIKILIHS (132 aa)). The span at 28–61 (RIAESKLKKPPKADGSHREDDEDSKPKPNSDLEA) shows a compositional bias: basic and acidic residues. One copy of the I repeat lies at 114–442 (ILSPFNLIRR…KAMLEQLKKQ (329 aa)). Residues 133–151 (VFSMIIMCTILTNCVFMTF) form a helical membrane-spanning segment. At 152–158 (SNPPEWS) the chain is on the extracellular side. The chain crosses the membrane as a helical span at residues 159-179 (KNVEYTFTGIYTFESLVKIIA). The Cytoplasmic portion of the chain corresponds to 180 to 193 (RGFCIDGFTFLRDP). Residues 194–211 (WNWLDFSVIMMAYVTEFV) traverse the membrane as a helical segment. Over 212-217 (DLGNVS) the chain is Extracellular. Asn-215 is a glycosylation site (N-linked (GlcNAc...) asparagine). The helical transmembrane segment at 218-234 (ALRTFRVLRALKTISVI) threads the bilayer. The Cytoplasmic segment spans residues 235–253 (PGLKTIVGALIQSVKKLSD). Residues 254-273 (VMILTVFCLSVFALIGLQLF) traverse the membrane as a helical segment. The Extracellular portion of the chain corresponds to 274-355 (MGNLRNKCVV…PNYGYTSFDT (82 aa)). Residues Cys-281 and Cys-333 are joined by a disulfide bond. Residues Asn-289, Asn-295, Asn-308, and Asn-326 are each glycosylated (N-linked (GlcNAc...) asparagine). Residues 356 to 380 (FSWAFLALFRLMTQDYWENLYQLTL) constitute an intramembrane region (pore-forming). Position 373 (Glu-373) interacts with Na(+). Over 381–387 (RAAGKTY) the chain is Extracellular. The chain crosses the membrane as a helical span at residues 388-408 (MIFFVLVIFVGSFYLVNLILA). Topologically, residues 409 to 751 (VVAMAYEEQN…EIVNLIVMDP (343 aa)) are cytoplasmic. Disordered regions lie at residues 446 to 530 (AQAA…KAFR) and 576 to 597 (DPGS…SEGR). Positions 473–486 (SPRSSSELSKLSSK) are enriched in low complexity. Residues 489-500 (KERRNRRKKRKQ) are compositionally biased toward basic residues. Composition is skewed to basic and acidic residues over residues 501-530 (KELS…KAFR) and 586-597 (DEHSTVEESEGR). A phosphoserine mark is found at Ser-518 and Ser-520. An II repeat occupies 733 to 1005 (CHPYWIKLKE…QISVIRIKKG (273 aa)). The chain crosses the membrane as a helical span at residues 752 to 770 (FVDLAITICIVLNTLFMAM). The Extracellular segment spans residues 771 to 781 (EHHPMTPQFEH). Residues 782–801 (VLAVGNLVFTGIFTAEMFLK) form a helical membrane-spanning segment. The Cytoplasmic segment spans residues 802–815 (LIAMDPYYYFQEGW). The chain crosses the membrane as a helical span at residues 816–835 (NIFDGFIVSLSLMELSLADV). Residues 836 to 837 (EG) are Extracellular-facing. The helical transmembrane segment at 838–855 (LSVLRSFRLLRVFKLAKS) threads the bilayer. At 856–871 (WPTLNMLIKIIGNSVG) the chain is on the cytoplasmic side. The helical transmembrane segment at 872-890 (ALGNLTLVLAIIVFIFAVV) threads the bilayer. Residues 891-919 (GMQLFGKSYKECVCKINQECKLPRWHMND) lie on the Extracellular side of the membrane. Cysteines 904 and 910 form a disulfide. An intramembrane region (pore-forming) is located at residues 920 to 940 (FFHSFLIVFRVLCGEWIETMW). Na(+)-binding residues include Glu-934 and Glu-937. The Extracellular segment spans residues 941–953 (DCMEVAGQAMCLI). A disulfide bridge links Cys-942 with Cys-951. The helical transmembrane segment at 954-974 (VFMMVMVIGNLVVLNLFLALL) threads the bilayer. Topologically, residues 975-1197 (LSSFSADNLA…TCFLIVEHNW (223 aa)) are cytoplasmic. A disordered region spans residues 1105–1146 (NLNTEDVSSESDPEGSKDKLDDTSSSEGSTIDIKPEVEEVPV). An III repeat occupies 1178-1493 (LGKSWWILRK…KKYYNAMKKL (316 aa)). A helical transmembrane segment spans residues 1198-1215 (FETFIIFMILLSSGALAF). The Extracellular portion of the chain corresponds to 1216–1228 (EDIYIEQRKTIRT). A helical transmembrane segment spans residues 1229–1247 (ILEYADKVFTYIFILEMLL). The Cytoplasmic segment spans residues 1248–1261 (KWTAYGFVKFFTNA). Residues 1262–1280 (WCWLDFLIVAVSLVSLIAN) form a helical membrane-spanning segment. Residues 1281-1288 (ALGYSELG) lie on the Extracellular side of the membrane. The helical transmembrane segment at 1289–1307 (AIKSLRTLRALRPLRALSR) threads the bilayer. Residues 1308–1324 (FEGMRVVVNALVGAIPS) lie on the Cytoplasmic side of the membrane. Residues 1325-1344 (IMNVLLVCLIFWLIFSIMGV) traverse the membrane as a helical segment. At 1345 to 1397 (NLFAGKYHYCFNETSEIRFEIDIVNNKTDCEKLMEGNSTEIRWKNVKINFDNV) the chain is on the extracellular side. Residues Cys-1354 and Cys-1374 are joined by a disulfide bond. Residues Asn-1356, Asn-1370, and Asn-1381 are each glycosylated (N-linked (GlcNAc...) asparagine). The pore-forming intramembrane region spans 1398–1419 (GAGYLALLQVATFKGWMDIMYA). Residues 1420 to 1436 (AVDSRKPDEQPDYEGNI) are Extracellular-facing. The helical transmembrane segment at 1437–1458 (YMYIYFVIFIIFGSFFTLNLFI) threads the bilayer. The Cytoplasmic segment spans residues 1459–1521 (GVIIDNFNQQ…IVFDFVTQQA (63 aa)). Ser-1495 is subject to Phosphoserine; by PKC. The stretch at 1502–1799 (IPRPLNKIQG…WEKFDPDATQ (298 aa)) is one IV repeat. The helical transmembrane segment at 1522–1539 (FDIVIMMLICLNMVTMMV) threads the bilayer. At 1540–1550 (ETDTQSKQMEN) the chain is on the extracellular side. Residues 1551–1569 (ILYWINLVFVIFFTCECVL) traverse the membrane as a helical segment. Residues 1570–1581 (KMFALRHYYFTI) lie on the Cytoplasmic side of the membrane. The chain crosses the membrane as a helical span at residues 1582–1599 (GWNIFDFVVVILSIVGMF). The Extracellular portion of the chain corresponds to 1600-1612 (LADIIEKYFVSPT). The chain crosses the membrane as a helical span at residues 1613-1629 (LFRVIRLARIGRILRLI). The Cytoplasmic portion of the chain corresponds to 1630–1648 (KGAKGIRTLLFALMMSLPA). The helical transmembrane segment at 1649–1666 (LFNIGLLLFLVMFIFSIF) threads the bilayer. The Extracellular portion of the chain corresponds to 1667-1688 (GMSNFAYVKHEAGIDDMFNFET). The segment at residues 1689–1711 (FGNSMICLFQITTSAGWDGLLLP) is an intramembrane region (pore-forming). The Extracellular portion of the chain corresponds to 1712 to 1740 (ILNRPPDCSLDKEHPGSGFKGDCGNPSVG). The cysteines at positions 1719 and 1734 are disulfide-linked. The helical transmembrane segment at 1741–1763 (IFFFVSYIIISFLIVVNMYIAII) threads the bilayer. The Cytoplasmic portion of the chain corresponds to 1764-1978 (LENFSVATEE…RQKEVRESKC (215 aa)). The IQ domain occupies 1893-1922 (EEVSAVVLQRAYRGHLARRGFICRKMASNK). The segment at 1923 to 1978 (LENGGTHRDKKESTPSTASLPSYDSVTKPDKEKQQRAEEGRRERAKRQKEVRESKC) is disordered. Positions 1936–1947 (TPSTASLPSYDS) are enriched in polar residues. Residues 1949 to 1978 (TKPDKEKQQRAEEGRRERAKRQKEVRESKC) show a composition bias toward basic and acidic residues.

The protein belongs to the sodium channel (TC 1.A.1.10) family. Nav1.6/SCN8A subfamily. In terms of assembly, the voltage-sensitive sodium channel consists of an ion-conducting pore-forming alpha subunit regulated by one or more beta-1 (SCN1B), beta-2 (SCN2B), beta-3 (SCN3B) and/or beta-4 (SCN4B) subunits. Beta-1 (SCN1B) and beta-3 (SCN3B) are non-covalently associated with alpha, while beta-2 (SCN2B) and beta-4 (SCN4B) are covalently linked by disulfide bonds. Interacts with NEDD4 and NEDD4L. Interacts with FGF13. Interacts with FGF14, GBG3, GBB2 and SCN1B. Interacts with TMEM233. Interacts with the conotoxin GVIIJ. Interacts with CALM1; the interaction modulates the inactivation rate of SCN8A. May be ubiquitinated by NEDD4L; which would promote its endocytosis. In terms of processing, phosphorylation at Ser-1495 by PKC in a highly conserved cytoplasmic loop slows inactivation of the sodium channel and reduces peak sodium currents. In terms of tissue distribution, isoform 1 is highly expressed in brain, moderately in spinal cord, and at low levels in dorsal root ganglia, nodose ganglia and superior cervical ganglia. Not detected in sciatic nerve and non-neuronal tissues. Isoform 2 is hardly detectable, if at all, in brain, expressed at low levels in spinal cord and at highest levels in dorsal root ganglia.

The protein localises to the cell membrane. It localises to the cell projection. Its subcellular location is the axon. The enzyme catalyses Na(+)(in) = Na(+)(out). In terms of biological role, pore-forming subunit of a voltage-gated sodium channel complex assuming opened or closed conformations in response to the voltage difference across membranes and through which sodium ions selectively pass along their electrochemical gradient. Contributes to neuronal excitability by regulating action potential threshold and propagation. The protein is Sodium channel protein type 8 subunit alpha of Rattus norvegicus (Rat).